Here is a 249-residue protein sequence, read N- to C-terminus: Isoamyl acetate-hydrolyzing esterase 1 homolog (249 aa).

Residue S24 is the Nucleophile of the active site. K63 bears the N6-succinyllysine mark. The Proton donor role is filled by D197. The active-site Proton acceptor is H200.

Belongs to the 'GDSL' lipolytic enzyme family. IAH1 subfamily.

In terms of biological role, probable lipase. The protein is Isoamyl acetate-hydrolyzing esterase 1 homolog (Iah1) of Mus musculus (Mouse).